Reading from the N-terminus, the 233-residue chain is 2,3,4,5-tetrahydropyridine-2,6-dicarboxylate N-acetyltransferase (233 aa).

Belongs to the transferase hexapeptide repeat family. DapH subfamily.

It catalyses the reaction (S)-2,3,4,5-tetrahydrodipicolinate + acetyl-CoA + H2O = L-2-acetamido-6-oxoheptanedioate + CoA. Its pathway is amino-acid biosynthesis; L-lysine biosynthesis via DAP pathway; LL-2,6-diaminopimelate from (S)-tetrahydrodipicolinate (acetylase route): step 1/3. In terms of biological role, catalyzes the transfer of an acetyl group from acetyl-CoA to tetrahydrodipicolinate. The chain is 2,3,4,5-tetrahydropyridine-2,6-dicarboxylate N-acetyltransferase from Thermosipho africanus (strain TCF52B).